We begin with the raw amino-acid sequence, 346 residues long: Phosphoribosylformylglycinamidine cyclo-ligase (346 aa).

The protein belongs to the AIR synthase family.

Its subcellular location is the cytoplasm. It catalyses the reaction 2-formamido-N(1)-(5-O-phospho-beta-D-ribosyl)acetamidine + ATP = 5-amino-1-(5-phospho-beta-D-ribosyl)imidazole + ADP + phosphate + H(+). Its pathway is purine metabolism; IMP biosynthesis via de novo pathway; 5-amino-1-(5-phospho-D-ribosyl)imidazole from N(2)-formyl-N(1)-(5-phospho-D-ribosyl)glycinamide: step 2/2. The chain is Phosphoribosylformylglycinamidine cyclo-ligase from Vibrio campbellii (strain ATCC BAA-1116).